A 484-amino-acid chain; its full sequence is Probable cytosol aminopeptidase (484 aa).

Mn(2+)-binding residues include Lys256 and Asp261. Lys268 is a catalytic residue. Positions 279, 338, and 340 each coordinate Mn(2+). Arg342 is an active-site residue.

It belongs to the peptidase M17 family. It depends on Mn(2+) as a cofactor.

The protein resides in the cytoplasm. It catalyses the reaction Release of an N-terminal amino acid, Xaa-|-Yaa-, in which Xaa is preferably Leu, but may be other amino acids including Pro although not Arg or Lys, and Yaa may be Pro. Amino acid amides and methyl esters are also readily hydrolyzed, but rates on arylamides are exceedingly low.. The enzyme catalyses Release of an N-terminal amino acid, preferentially leucine, but not glutamic or aspartic acids.. Its function is as follows. Presumably involved in the processing and regular turnover of intracellular proteins. Catalyzes the removal of unsubstituted N-terminal amino acids from various peptides. The protein is Probable cytosol aminopeptidase of Methylibium petroleiphilum (strain ATCC BAA-1232 / LMG 22953 / PM1).